A 393-amino-acid chain; its full sequence is NAD(P)H-quinone oxidoreductase subunit H, chloroplastic (393 aa).

Belongs to the complex I 49 kDa subunit family. As to quaternary structure, NDH is composed of at least 16 different subunits, 5 of which are encoded in the nucleus.

The protein localises to the plastid. It localises to the chloroplast thylakoid membrane. The enzyme catalyses a plastoquinone + NADH + (n+1) H(+)(in) = a plastoquinol + NAD(+) + n H(+)(out). It carries out the reaction a plastoquinone + NADPH + (n+1) H(+)(in) = a plastoquinol + NADP(+) + n H(+)(out). In terms of biological role, NDH shuttles electrons from NAD(P)H:plastoquinone, via FMN and iron-sulfur (Fe-S) centers, to quinones in the photosynthetic chain and possibly in a chloroplast respiratory chain. The immediate electron acceptor for the enzyme in this species is believed to be plastoquinone. Couples the redox reaction to proton translocation, and thus conserves the redox energy in a proton gradient. The protein is NAD(P)H-quinone oxidoreductase subunit H, chloroplastic of Drimys granadensis.